We begin with the raw amino-acid sequence, 5193 residues long: Usherin (5193 aa).

The N-terminal stretch at 1-34 is a signal peptide; sequence MHYLALSPGFLCYTIKTLILAYLASVLVLAASQG. Residues 35–5033 are Extracellular-facing; sequence VFPRLENVGA…KSTEFYSELW (4999 aa). 7 N-linked (GlcNAc...) asparagine glycosylation sites follow: asparagine 230, asparagine 258, asparagine 274, asparagine 358, asparagine 415, asparagine 448, and asparagine 469. Positions 268–514 constitute a Laminin N-terminal domain; it reads QDFRLYNVSL…AVDEIIVSGR (247 aa). Cystine bridges form between cysteine 515–cysteine 524, cysteine 517–cysteine 533, cysteine 535–cysteine 546, cysteine 549–cysteine 569, cysteine 572–cysteine 581, cysteine 574–cysteine 602, cysteine 605–cysteine 614, cysteine 617–cysteine 635, cysteine 638–cysteine 652, cysteine 640–cysteine 659, cysteine 661–cysteine 670, cysteine 673–cysteine 688, cysteine 691–cysteine 705, cysteine 693–cysteine 712, cysteine 714–cysteine 723, cysteine 726–cysteine 741, cysteine 744–cysteine 756, cysteine 746–cysteine 763, cysteine 765–cysteine 774, cysteine 777–cysteine 789, cysteine 792–cysteine 805, cysteine 794–cysteine 812, cysteine 814–cysteine 823, and cysteine 826–cysteine 846. 10 consecutive Laminin EGF-like domains span residues 515 to 571, 572 to 637, 638 to 690, 691 to 743, 744 to 791, 792 to 848, 853 to 896, 897 to 947, 948 to 998, and 999 to 1049; these read CQCH…NCKP, CQCH…ACKL, CDCN…GCRP, CNCN…GCEP, CQCN…ACEV, CDCS…NCEK, NGSL…GCQA, CDCD…GCLP, CLCH…RCRP, and CHCH…GCSK. Asparagine 647 carries an N-linked (GlcNAc...) asparagine glycan. N-linked (GlcNAc...) asparagine glycosylation is found at asparagine 836 and asparagine 853. 14 cysteine pairs are disulfide-bonded: cysteine 867-cysteine 876, cysteine 879-cysteine 894, cysteine 897-cysteine 910, cysteine 899-cysteine 917, cysteine 919-cysteine 928, cysteine 931-cysteine 945, cysteine 948-cysteine 960, cysteine 950-cysteine 967, cysteine 969-cysteine 979, cysteine 982-cysteine 996, cysteine 999-cysteine 1011, cysteine 1001-cysteine 1018, cysteine 1020-cysteine 1029, and cysteine 1032-cysteine 1047. The N-linked (GlcNAc...) asparagine glycan is linked to asparagine 885. Asparagine 941 carries an N-linked (GlcNAc...) asparagine glycan. N-linked (GlcNAc...) asparagine glycosylation is present at asparagine 1008. 5 Fibronectin type-III domains span residues 1055-1143, 1147-1241, 1242-1357, 1358-1462, and 1463-1566; these read PPPR…TKPE, GHLN…APPQ, TQGP…SVPV, FMAP…AAPA, and QLRP…LQLK. Residues asparagine 1068, asparagine 1089, asparagine 1150, asparagine 1171, and asparagine 1222 are each glycosylated (N-linked (GlcNAc...) asparagine). N-linked (GlcNAc...) asparagine glycans are attached at residues asparagine 1382, asparagine 1473, and asparagine 1626. 2 consecutive Laminin G-like domains span residues 1511-1700 and 1705-1882; these read TKGT…WEGC and EEGV…QDGC. An intrachain disulfide couples cysteine 1663 to cysteine 1700. A glycan (N-linked (GlcNAc...) asparagine) is linked at asparagine 1770. 13 consecutive Fibronectin type-III domains span residues 1847–1946, 1948–2045, 2046–2132, 2133–2234, 2235–2321, 2322–2421, 2422–2525, 2526–2613, 2617–2713, 2717–2810, 2811–2914, 2918–3009, and 3013–3103; these read EPGF…TAPQ, VPTP…TPQE, APQE…TAQL, PPEQ…IPEG, VPAP…APPE, GVVN…SVEM, PPGA…DKPG, PIDA…TLPG, GIPS…TRPC, GVQP…THPA, PPQE…TLAG, RGAT…MWEE, and GMLP…TPSD. The cysteines at positions 1853 and 1882 are disulfide-linked. Asparagine 1894 is a glycosylation site (N-linked (GlcNAc...) asparagine). A disordered region spans residues 1931–1955; that stretch reads VSSDWSRGRTLGTAPQSVPTPSRAQ. Polar residues predominate over residues 1943-1955; the sequence is TAPQSVPTPSRAQ. N-linked (GlcNAc...) asparagine glycans are attached at residues asparagine 1958, asparagine 2095, asparagine 2121, asparagine 2177, asparagine 2186, asparagine 2249, asparagine 2276, asparagine 2313, asparagine 2368, and asparagine 2404. N-linked (GlcNAc...) asparagine glycosylation is found at asparagine 2575, asparagine 2647, asparagine 2701, asparagine 2761, and asparagine 2779. N-linked (GlcNAc...) asparagine glycans are attached at residues asparagine 2928, asparagine 2998, asparagine 3023, asparagine 3090, asparagine 3208, asparagine 3322, and asparagine 3411. Fibronectin type-III domains lie at 3395–3489, 3490–3580, 3581–3671, 3672–3766, 3769–3857, 3858–3955, 3956–4059, 4060–4148, 4149–4256, 4257–4346, 4347–4437, 4438–4522, 4523–4625, 4628–4725, 4726–4818, 4819–4921, and 4922–5005; these read CPAT…TRED, VPEG…TTQR, SPEN…TLQA, APQG…TPED, PPCN…TLEA, APVG…TLEA, PPRG…SAPS, GLMN…APPD, TQMA…APPD, GLSP…TPEV, PPSE…APPE, NMDP…TSPS, APSG…VPPL, PAPH…TGPA, PPEG…THPA, PPSG…TKKE, and MPQY…YDAA. N-linked (GlcNAc...) asparagine glycosylation is found at asparagine 3589, asparagine 3645, asparagine 3686, asparagine 3712, asparagine 3723, and asparagine 3772. 8 N-linked (GlcNAc...) asparagine glycosylation sites follow: asparagine 3976, asparagine 4063, asparagine 4194, asparagine 4218, asparagine 4304, asparagine 4340, asparagine 4365, and asparagine 4410. N-linked (GlcNAc...) asparagine glycans are attached at residues asparagine 4556, asparagine 4575, asparagine 4683, asparagine 4716, asparagine 4746, asparagine 4756, asparagine 4765, asparagine 4915, and asparagine 4934. A helical transmembrane segment spans residues 5034 to 5054; that stretch reads FIMVMAVVGLILLAIFLSLIL. Residues 5055–5193 are Cytoplasmic-facing; sequence QRKIHKEPCI…EHTAFTDTHL (139 aa). Residues 5191 to 5193 carry the PDZ-binding motif; the sequence is THL.

In terms of assembly, interacts with collagen IV and fibronectin via its laminin EGF-like domains. Interaction with collagen may be required for stable integration into the basement membrane. Interacts with NINL. Interacts with USH1C. Component of USH2 complex, composed of ADGRV1, PDZD7, USH2A and WHRN. Interacts with ADGRV1/MASS1 (via N-terminal PDZ domain). Interacts (via the cytoplasmic region) with WHRN. Interacts (via the cytoplasmic region) with PDZD7. Interacts (via the cytoplasmic region) with VEZT and MYO7A (via MyTH4-FERM domains); the interaction associates VEZT with the USH2 complex at the stereocilia base. In terms of tissue distribution, present in the testis, epididymis, oviduct, spleen, submaxillary gland, and small and large intestines. Not detected in the brain, skin, lung, skeletal muscle, cardiac muscle, liver or kidney. Expressed in smooth muscle of the colon and the epididymis. Also present in select vascular basement membranes. In the cochlea, it is present in virtually every basement membrane. It is particularly high in the strial capillary basement membranes (SCBMs). In the retina, it is again expressed in all of the basement membranes. It is also very prevalent in the lens capsule and the Bruch's layer between the retinal pigment epithelium and the choroid layer, which is very rich in basement membranes. In neonates in it is widely expressed in the basement membranes of the cochlea. Present in the synaptic terminals of retinal photoreceptors (at protein level).

Its subcellular location is the cell projection. It localises to the stereocilium membrane. The protein resides in the photoreceptor inner segment. The protein localises to the secreted. Its function is as follows. Involved in hearing and vision as member of the USH2 complex. In the inner ear, required for the maintenance of hair bundle ankle formation, which connects growing stereocilia in developing cochlear hair cells. In retina photoreceptors, the USH2 complex is required for the maintenance of periciliary membrane complex that seems to play a role in regulating intracellular protein transport. This is Usherin (Ush2A) from Mus musculus (Mouse).